Reading from the N-terminus, the 238-residue chain is Tabinhibitin 5 (238 aa).

The N-terminal stretch at 1-23 (MTSILVSRFLLAALVLQYATIDA) is a signal peptide. Positions 32-34 (RGD) match the Cell attachment site motif. Positions 67-211 (LSKINDVRDH…KARALLTCNF (145 aa)) constitute an SCP domain.

The protein belongs to the CRISP family. As to expression, expressed in salivary glands.

Its subcellular location is the secreted. Functionally, inhibits platelet aggregation induced by all agonists tested (ADP, arachidonic acid, the thromboxane A2 analog U46619, thrombin, and snake venom snaclecs (TMVA that activates platelet through GPIB, and stejnulxin that specifically acts through GPVI (GP6))). May act by competing with fibrinogen for binding to glycoprotein IIb/IIIa (ITGA2B/ITGB3). In Tabanus yao (Horsefly), this protein is Tabinhibitin 5.